We begin with the raw amino-acid sequence, 110 residues long: Large ribosomal subunit protein uL22 (110 aa).

This sequence belongs to the universal ribosomal protein uL22 family. As to quaternary structure, part of the 50S ribosomal subunit.

Functionally, this protein binds specifically to 23S rRNA; its binding is stimulated by other ribosomal proteins, e.g. L4, L17, and L20. It is important during the early stages of 50S assembly. It makes multiple contacts with different domains of the 23S rRNA in the assembled 50S subunit and ribosome. In terms of biological role, the globular domain of the protein is located near the polypeptide exit tunnel on the outside of the subunit, while an extended beta-hairpin is found that lines the wall of the exit tunnel in the center of the 70S ribosome. This chain is Large ribosomal subunit protein uL22, found in Pseudoalteromonas translucida (strain TAC 125).